Here is a 221-residue protein sequence, read N- to C-terminus: MNLYGIFGAGSYGRETIPILNQQIKQECGSDYALVFVDDVLAGKKVNGFEVLSTNCFLKAPYLKKYFNVAIANDKIRQRVSESILLHGVEPITIKHPNSVVYDHTMIGSGAIISPFVTISTNTHIGRFFHANIYSYVAHDCQIGDYVTFAPGAKCNGYVVIEDNAYIGSGAVIKQGVPNRPLIIGAGAIIGMGAVVTKSVPAGITVCGNPAREMKRSPTSI.

The Proton acceptor role is filled by His139.

The protein belongs to the transferase hexapeptide repeat family. Homotrimer.

It catalyses the reaction GDP-alpha-D-perosamine + acetyl-CoA = GDP-N-acetyl-alpha-D-perosamine + CoA + H(+). It participates in bacterial outer membrane biogenesis; LPS O-antigen biosynthesis. Its function is as follows. Catalyzes the transfer of an acetyl residue from acetyl-CoA onto GDP-perosamine to form GDP-N-acetyl-perosamine. The sequence is that of GDP-perosamine N-acetyltransferase from Escherichia coli O157:H7.